The chain runs to 158 residues: Small ribosomal subunit protein uS15 (158 aa).

Residues 1–18 (MARMHARKRGKSGSKRPP) show a composition bias toward basic residues. The tract at residues 1–21 (MARMHARKRGKSGSKRPPRTA) is disordered.

It belongs to the universal ribosomal protein uS15 family. Part of the 30S ribosomal subunit.

The chain is Small ribosomal subunit protein uS15 from Pyrococcus furiosus (strain ATCC 43587 / DSM 3638 / JCM 8422 / Vc1).